Reading from the N-terminus, the 185-residue chain is Elongation factor P (185 aa).

The protein belongs to the elongation factor P family.

It is found in the cytoplasm. Its pathway is protein biosynthesis; polypeptide chain elongation. In terms of biological role, involved in peptide bond synthesis. Stimulates efficient translation and peptide-bond synthesis on native or reconstituted 70S ribosomes in vitro. Probably functions indirectly by altering the affinity of the ribosome for aminoacyl-tRNA, thus increasing their reactivity as acceptors for peptidyl transferase. This Burkholderia multivorans (strain ATCC 17616 / 249) protein is Elongation factor P.